The primary structure comprises 472 residues: Glutamate--tRNA ligase (472 aa).

Residues 10–20 (PSPTGYLHVGG) carry the 'HIGH' region motif. Residues C99, C101, C126, and H128 each contribute to the Zn(2+) site. The short motif at 238–242 (KLSKR) is the 'KMSKS' region element. Position 241 (K241) interacts with ATP.

The protein belongs to the class-I aminoacyl-tRNA synthetase family. Glutamate--tRNA ligase type 1 subfamily. Monomer. Zn(2+) is required as a cofactor.

Its subcellular location is the cytoplasm. It catalyses the reaction tRNA(Glu) + L-glutamate + ATP = L-glutamyl-tRNA(Glu) + AMP + diphosphate. In terms of biological role, catalyzes the attachment of glutamate to tRNA(Glu) in a two-step reaction: glutamate is first activated by ATP to form Glu-AMP and then transferred to the acceptor end of tRNA(Glu). The protein is Glutamate--tRNA ligase of Proteus mirabilis (strain HI4320).